The chain runs to 159 residues: Putative ribosomal RNA large subunit methyltransferase H (159 aa).

S-adenosyl-L-methionine is bound by residues Leu76, Gly108, and 127-132 (LSAMTF).

It belongs to the RNA methyltransferase RlmH family.

Its subcellular location is the cytoplasm. It carries out the reaction pseudouridine(1915) in 23S rRNA + S-adenosyl-L-methionine = N(3)-methylpseudouridine(1915) in 23S rRNA + S-adenosyl-L-homocysteine + H(+). Functionally, specifically methylates the pseudouridine at position 1915 (m3Psi1915) in 23S rRNA. The chain is Putative ribosomal RNA large subunit methyltransferase H from Methanospirillum hungatei JF-1 (strain ATCC 27890 / DSM 864 / NBRC 100397 / JF-1).